Reading from the N-terminus, the 198-residue chain is NAD(P)H dehydrogenase (quinone) (198 aa).

The region spanning 4–190 (ILVLYYSMYG…ILASFQGAHV (187 aa)) is the Flavodoxin-like domain. Residues 10 to 15 (SMYGHI) and 79 to 81 (TRF) contribute to the FMN site. Tyr12 is a binding site for NAD(+). Residue Trp99 participates in substrate binding. FMN contacts are provided by residues 114–119 (STGTGG) and His134.

The protein belongs to the WrbA family. It depends on FMN as a cofactor.

The enzyme catalyses a quinone + NADH + H(+) = a quinol + NAD(+). It carries out the reaction a quinone + NADPH + H(+) = a quinol + NADP(+). This is NAD(P)H dehydrogenase (quinone) from Azotobacter vinelandii (strain DJ / ATCC BAA-1303).